Reading from the N-terminus, the 198-residue chain is Phosphoheptose isomerase (198 aa).

The region spanning 40-198 is the SIS domain; that stretch reads IVTALRSGRK…IEAALMQDLS (159 aa). 55-57 contributes to the substrate binding site; the sequence is NGG. 2 residues coordinate Zn(2+): histidine 64 and glutamate 68. Residues glutamate 68, 97 to 98, 123 to 125, serine 128, and glutamine 175 contribute to the substrate site; these read ND and STS. Glutamine 175 and histidine 183 together coordinate Zn(2+).

It belongs to the SIS family. GmhA subfamily. In terms of assembly, homotetramer. The cofactor is Zn(2+).

The protein localises to the cytoplasm. The enzyme catalyses 2 D-sedoheptulose 7-phosphate = D-glycero-alpha-D-manno-heptose 7-phosphate + D-glycero-beta-D-manno-heptose 7-phosphate. The protein operates within carbohydrate biosynthesis; D-glycero-D-manno-heptose 7-phosphate biosynthesis; D-glycero-alpha-D-manno-heptose 7-phosphate and D-glycero-beta-D-manno-heptose 7-phosphate from sedoheptulose 7-phosphate: step 1/1. Catalyzes the isomerization of sedoheptulose 7-phosphate in D-glycero-D-manno-heptose 7-phosphate. The sequence is that of Phosphoheptose isomerase from Bradyrhizobium sp. (strain BTAi1 / ATCC BAA-1182).